Reading from the N-terminus, the 467-residue chain is Solute carrier family 52, riboflavin transporter, member 3 (467 aa).

The Cytoplasmic segment spans residues 1–2; the sequence is MA. The chain crosses the membrane as a helical span at residues 3 to 23; sequence FLIHLLVCTFGMGSWVAINGL. Residues 24–43 lie on the Extracellular side of the membrane; it reads WVELPLLVTELPEGWYLPSY. A helical transmembrane segment spans residues 44 to 64; sequence LTVIIQLANVGPLLVTLLHHF. The Cytoplasmic portion of the chain corresponds to 65 to 71; the sequence is RPGCLSE. The helical transmembrane segment at 72–92 threads the bilayer; it reads VAVVFTVLGVGTIACTLFAFL. Residues 93-105 lie on the Extracellular side of the membrane; that stretch reads WNVTSWVLGSRHS. The N-linked (GlcNAc...) asparagine glycan is linked to N94. Residues 106 to 126 form a helical membrane-spanning segment; the sequence is IAFLVLTFFLALVDCTSSVTF. Over 127-137 the chain is Cytoplasmic; the sequence is LPFMSRLPTYY. Residues 138-158 form a helical membrane-spanning segment; the sequence is LTTFFVGEGLSGLLPALVALA. Residues 159–220 are Extracellular-facing; it reads QGSGLTTCVN…SRYLPANFSP (62 aa). Residue N168 is glycosylated (N-linked (GlcNAc...) asparagine). Residues 221–241 traverse the membrane as a helical segment; sequence LVFFLLLSFMMACCFISFFFL. The Cytoplasmic portion of the chain corresponds to 242-294; it reads QRQPKRWEASIEDLLTSQVTLNSIRPQEGKDLGPPEESGKAQDPPEEKTAPQH. S251 is modified (phosphoserine). The disordered stretch occupies residues 266-288; the sequence is RPQEGKDLGPPEESGKAQDPPEE. Basic and acidic residues predominate over residues 268–288; that stretch reads QEGKDLGPPEESGKAQDPPEE. The chain crosses the membrane as a helical span at residues 295–315; that stretch reads LAHLTFIYVLVAFVNALTNGV. At 316 to 333 the chain is on the extracellular side; it reads LPSVQTYSCLSYGPVAYH. The helical transmembrane segment at 334 to 354 threads the bilayer; that stretch reads LSATLSSMASPLTCFLSIFLP. Residues 355 to 359 are Cytoplasmic-facing; sequence NRSLP. A helical membrane pass occupies residues 360-380; sequence FLGVLAVLGTSFGAYNMAMAV. The Extracellular segment spans residues 381-394; it reads MSPCPFMQGHWGGE. The chain crosses the membrane as a helical span at residues 395 to 415; that stretch reads VLIVVSWVLFTGCLSYVKVML. Residues 416–425 are Cytoplasmic-facing; that stretch reads GVILRDHSRS. A helical membrane pass occupies residues 426 to 446; sequence ALLWCGAAVQLGSLLGAVVMF. Over 447–467 the chain is Extracellular; it reads PLVNVLRLFSSADFCSLQCSA.

The protein belongs to the riboflavin transporter family.

It is found in the cell membrane. It catalyses the reaction riboflavin(in) = riboflavin(out). Its function is as follows. Plasma membrane transporter mediating the uptake by cells of the water soluble vitamin B2/riboflavin that plays a key role in biochemical oxidation-reduction reactions of the carbohydrate, lipid, and amino acid metabolism. The chain is Solute carrier family 52, riboflavin transporter, member 3 (SLC52A3) from Bos taurus (Bovine).